The chain runs to 231 residues: Putative N-acetylmannosamine-6-phosphate 2-epimerase (231 aa).

This sequence belongs to the NanE family.

It carries out the reaction an N-acyl-D-glucosamine 6-phosphate = an N-acyl-D-mannosamine 6-phosphate. It functions in the pathway amino-sugar metabolism; N-acetylneuraminate degradation; D-fructose 6-phosphate from N-acetylneuraminate: step 3/5. In terms of biological role, converts N-acetylmannosamine-6-phosphate (ManNAc-6-P) to N-acetylglucosamine-6-phosphate (GlcNAc-6-P). The polypeptide is Putative N-acetylmannosamine-6-phosphate 2-epimerase (Listeria innocua serovar 6a (strain ATCC BAA-680 / CLIP 11262)).